The chain runs to 250 residues: tRNA (guanine-N(1)-)-methyltransferase (250 aa).

Residues Gly116 and 136 to 141 each bind S-adenosyl-L-methionine; that span reads IGDYVL.

Belongs to the RNA methyltransferase TrmD family. Homodimer.

It localises to the cytoplasm. It catalyses the reaction guanosine(37) in tRNA + S-adenosyl-L-methionine = N(1)-methylguanosine(37) in tRNA + S-adenosyl-L-homocysteine + H(+). In terms of biological role, specifically methylates guanosine-37 in various tRNAs. The protein is tRNA (guanine-N(1)-)-methyltransferase of Stutzerimonas stutzeri (strain A1501) (Pseudomonas stutzeri).